The chain runs to 546 residues: Intermembrane transport protein PqiB (546 aa).

The Cytoplasmic segment spans residues Met1 to Asn15. A helical transmembrane segment spans residues Trp16–Tyr36. Residues His37 to Gln546 lie on the Periplasmic side of the membrane. 3 MCE/MlaD regions span residues Gly42–Gly133, Ile158–Arg217, and His285–Tyr389. A coiled-coil region spans residues Ile437 to Ile464.

This sequence belongs to the PqiB family. Homohexamer. May form a complex composed of PqiA, PqiB and PqiC. Interacts with PqiC.

The protein resides in the cell inner membrane. Functionally, forms a tunnel that spans the entire periplasmic space. Could be implicated in lipid transport between the inner membrane and the outer membrane. Binds phospholipids. Required for outer membrane homeostasis. Contributes to membrane integrity. The polypeptide is Intermembrane transport protein PqiB (Escherichia coli (strain K12)).